We begin with the raw amino-acid sequence, 222 residues long: Glutathione S-transferase A4 (222 aa).

An N-acetylmethionine modification is found at Met-1. The 81-residue stretch at 3-83 (AKPKLYYFNG…YLAAKYNLYG (81 aa)) folds into the GST N-terminal domain. Glutathione contacts are provided by residues Tyr-9, 53-55 (GQV), and 66-68 (TQT). A GST C-terminal domain is found at 85-208 (DLKERVRIDM…QPGSQRKPPP (124 aa)).

It belongs to the GST superfamily. Alpha family. Homodimer. In terms of processing, the N-terminus is blocked.

The protein localises to the cytoplasm. The enzyme catalyses RX + glutathione = an S-substituted glutathione + a halide anion + H(+). Conjugation of reduced glutathione to a wide number of exogenous and endogenous hydrophobic electrophiles. The chain is Glutathione S-transferase A4 (Gsta4) from Mus musculus (Mouse).